Consider the following 190-residue polypeptide: Probable nicotinate-nucleotide adenylyltransferase (190 aa).

Belongs to the NadD family.

The enzyme catalyses nicotinate beta-D-ribonucleotide + ATP + H(+) = deamido-NAD(+) + diphosphate. It participates in cofactor biosynthesis; NAD(+) biosynthesis; deamido-NAD(+) from nicotinate D-ribonucleotide: step 1/1. Its function is as follows. Catalyzes the reversible adenylation of nicotinate mononucleotide (NaMN) to nicotinic acid adenine dinucleotide (NaAD). The protein is Probable nicotinate-nucleotide adenylyltransferase of Azobacteroides pseudotrichonymphae genomovar. CFP2.